We begin with the raw amino-acid sequence, 382 residues long: MLVVKADYKKYPIPVLEKMRIDEDEFYKKYEACVVVQTCNRIEAYFDTEVNSNVDDILKDFQGFDILKGKNATFHFLKVSCGMDSMILGENQILGQIKTSFQKAREFKKTSRYLDSLFLKAIHVGQRARTETKINEGGVSIGSAAVELAEKNFGLTNRNVLLIGAGEIGTLVAKALVEKHIKAVIVANRTYERAETLAKELKGMAVHFDKLREAVNFSDVIICATSSPHYILEKEDLIDVGNKIIIDIANPRDVDDSVRELENIELYTIDDLRNISDKNLQRRIEEIPTVEKIIEEEYDVLMKQIEKINVEEVLKEFNTYIEEIRVKELEKAIKLSKSKDPEEIMENFSKAFAKRITHDFVSYSLNTSKEDLMNSAWWKNGK.

Substrate-binding positions include 38–41, serine 85, 90–92, and glutamine 96; these read TCNR and ENQ. Cysteine 39 functions as the Nucleophile in the catalytic mechanism. Residue 164 to 169 coordinates NADP(+); sequence GAGEIG.

It belongs to the glutamyl-tRNA reductase family. In terms of assembly, homodimer.

It carries out the reaction (S)-4-amino-5-oxopentanoate + tRNA(Glu) + NADP(+) = L-glutamyl-tRNA(Glu) + NADPH + H(+). Its pathway is porphyrin-containing compound metabolism; protoporphyrin-IX biosynthesis; 5-aminolevulinate from L-glutamyl-tRNA(Glu): step 1/2. Catalyzes the NADPH-dependent reduction of glutamyl-tRNA(Glu) to glutamate 1-semialdehyde (GSA). The protein is Glutamyl-tRNA reductase of Methanococcus maripaludis (strain C7 / ATCC BAA-1331).